Consider the following 151-residue polypeptide: Small ribosomal subunit protein uS13 (151 aa).

The protein belongs to the universal ribosomal protein uS13 family. In terms of assembly, part of the 30S ribosomal subunit. Forms a loose heterodimer with protein S19. Forms two bridges to the 50S subunit in the 70S ribosome.

Located at the top of the head of the 30S subunit, it contacts several helices of the 16S rRNA. In the 70S ribosome it contacts the 23S rRNA (bridge B1a) and protein L5 of the 50S subunit (bridge B1b), connecting the 2 subunits; these bridges are implicated in subunit movement. In Staphylothermus marinus (strain ATCC 43588 / DSM 3639 / JCM 9404 / F1), this protein is Small ribosomal subunit protein uS13.